Reading from the N-terminus, the 82-residue chain is MVLVQDLLHPTAASEARKHKLKTLVQGPRSYFLDVKCPGCLNITTVFSHAQTAVTCESCSTILCTPTGGKAKLSEGTSFRRK.

The C4-type zinc-finger motif lies at 37-59; the sequence is CPGCLNITTVFSHAQTAVTCESC. An S-methylcysteine modification is found at cysteine 40.

Belongs to the eukaryotic ribosomal protein eS27 family. Component of the small ribosomal subunit (SSU). Mature yeast ribosomes consist of a small (40S) and a large (60S) subunit. The 40S small subunit contains 1 molecule of ribosomal RNA (18S rRNA) and 33 different proteins (encoded by 57 genes). The large 60S subunit contains 3 rRNA molecules (25S, 5.8S and 5S rRNA) and 46 different proteins (encoded by 81 genes). Zn(2+) is required as a cofactor. Post-translationally, the N-terminus is not modified.

The protein resides in the cytoplasm. Functionally, component of the ribosome, a large ribonucleoprotein complex responsible for the synthesis of proteins in the cell. The small ribosomal subunit (SSU) binds messenger RNAs (mRNAs) and translates the encoded message by selecting cognate aminoacyl-transfer RNA (tRNA) molecules. The large subunit (LSU) contains the ribosomal catalytic site termed the peptidyl transferase center (PTC), which catalyzes the formation of peptide bonds, thereby polymerizing the amino acids delivered by tRNAs into a polypeptide chain. The nascent polypeptides leave the ribosome through a tunnel in the LSU and interact with protein factors that function in enzymatic processing, targeting, and the membrane insertion of nascent chains at the exit of the ribosomal tunnel. The sequence is that of Small ribosomal subunit protein eS27A from Saccharomyces cerevisiae (strain ATCC 204508 / S288c) (Baker's yeast).